A 283-amino-acid polypeptide reads, in one-letter code: Pseudokinase OPG198 (283 aa).

Met-1 and Lys-30 together coordinate ATP. The Protein kinase domain maps to 1–283 (MESFKYCFDN…DRLRRLFIQD (283 aa)).

Belongs to the protein kinase superfamily. Ser/Thr protein kinase family. Poxviruses subfamily. As to quaternary structure, interacts with B1/VPK1. Interacts with host VRK1. Interacts with host VRK2.

The protein localises to the host nucleus. With respect to regulation, both catalytically active kinases B1/VPK1 and host VRK2 repress B12 inhibitory activity in a B1/VPK1 deletion mutant strain. Pseudokinase that plays a role in viral DNA replication repression by activating the antiviral protein BANF1 and inhibiting the activity of host VRK1, a cellular modulator of BANF1. The chain is Pseudokinase OPG198 (OPG198) from Homo sapiens (Human).